Consider the following 670-residue polypeptide: UvrABC system protein B (670 aa).

Residues 25–412 (EGLEAGLSHQ…AGRVIEQVVR (388 aa)) enclose the Helicase ATP-binding domain. 38 to 45 (GVTGSGKT) is a binding site for ATP. The short motif at 91-114 (YYDYYQPEAYVPSSDTYIEKDSSI) is the Beta-hairpin element. The 154-residue stretch at 429–582 (QVDDLLSQIR…QIAFNEAHGI (154 aa)) folds into the Helicase C-terminal domain. The 36-residue stretch at 631–666 (SKRIRQLEEKMYQLARDLEFEAAAQLRDEIQTLRER) folds into the UVR domain.

This sequence belongs to the UvrB family. Forms a heterotetramer with UvrA during the search for lesions. Interacts with UvrC in an incision complex.

It is found in the cytoplasm. In terms of biological role, the UvrABC repair system catalyzes the recognition and processing of DNA lesions. A damage recognition complex composed of 2 UvrA and 2 UvrB subunits scans DNA for abnormalities. Upon binding of the UvrA(2)B(2) complex to a putative damaged site, the DNA wraps around one UvrB monomer. DNA wrap is dependent on ATP binding by UvrB and probably causes local melting of the DNA helix, facilitating insertion of UvrB beta-hairpin between the DNA strands. Then UvrB probes one DNA strand for the presence of a lesion. If a lesion is found the UvrA subunits dissociate and the UvrB-DNA preincision complex is formed. This complex is subsequently bound by UvrC and the second UvrB is released. If no lesion is found, the DNA wraps around the other UvrB subunit that will check the other stand for damage. In Pseudomonas aeruginosa (strain ATCC 15692 / DSM 22644 / CIP 104116 / JCM 14847 / LMG 12228 / 1C / PRS 101 / PAO1), this protein is UvrABC system protein B.